Consider the following 322-residue polypeptide: MAAAPSESIPSVNKAWVXSEYGKTSDVLKFDPSVAVPEIKEDQVLIKVVAASLNPVDFKRALGYFKDTDSPLPTIPGYYVAGVVVKVGSQVTKFKVGDEVYGDLNETALVNPTRFGSLAEYTAADERVLAHKPKNLSFIEAASLPLAIETAHEGLERAELSAGKSVLVLGGAGGVGTHIIQLAKHVFGASKVAATASTKKLDLLRTLGADLAIDYTKENFEDLPEKFDVVYDAVGETDKAVKAVKEGGKVVTIVGPATPPAILFVLTSKGSVLEKLKPYLESGKVKPVLDPTSPYPFTKVVEAFGYLESSRATGKVVVYPIP.

Residues Lys-59, 174 to 175 (GV), 197 to 200 (STKK), Tyr-215, Ile-253, 264 to 266 (FVL), and 311 to 312 (RA) contribute to the NADP(+) site. Lys-59 contacts substrate.

This sequence belongs to the zinc-containing alcohol dehydrogenase family. Quinone oxidoreductase subfamily. In terms of assembly, monomer.

The enzyme catalyses 4-hydroxy-2,5-dimethyl-furan-3(2H)-one + NADP(+) = 4-hydroxy-5-methyl-2-methylenefuran-3(2H)-one + NADPH + H(+). Functionally, enone oxidoreductase involved in the biosynthesis of 4-hydroxy-2,5-dimethyl-3(2H)-furanone (HDMF or furaneol), the key flavor compound in strawberries. The protein is 2-methylene-furan-3-one reductase (EO) of Fragaria vesca (Woodland strawberry).